The chain runs to 462 residues: Cysteine--tRNA ligase (462 aa).

Position 30 (Cys30) interacts with Zn(2+). The 'HIGH' region signature appears at 32–42 (MTVYDYCHVGH). Zn(2+) contacts are provided by Cys214, His239, and Glu243. The 'KMSKS' region signature appears at 271–275 (KMSKS). Lys274 provides a ligand contact to ATP.

This sequence belongs to the class-I aminoacyl-tRNA synthetase family. Monomer. Requires Zn(2+) as cofactor.

Its subcellular location is the cytoplasm. The catalysed reaction is tRNA(Cys) + L-cysteine + ATP = L-cysteinyl-tRNA(Cys) + AMP + diphosphate. The polypeptide is Cysteine--tRNA ligase (Cupriavidus pinatubonensis (strain JMP 134 / LMG 1197) (Cupriavidus necator (strain JMP 134))).